The sequence spans 113 residues: Endoribonuclease SymE (113 aa).

The 46-residue stretch at 29-74 folds into the SpoVT-AbrB domain; the sequence is SRYPDYSRIPAITLKGQWLEAAGFATGTAIDVKVMEGCIVLTAQPP.

Belongs to the SymE family.

The protein localises to the cytoplasm. Functionally, involved in the degradation and recycling of damaged RNA. It is itself a target for degradation by the ATP-dependent protease Lon. This chain is Endoribonuclease SymE, found in Escherichia coli O1:K1 / APEC.